Reading from the N-terminus, the 184-residue chain is ATP-dependent protease subunit HslV (184 aa).

Thr11 is an active-site residue. Residues Ala165, Cys168, and Thr171 each contribute to the Na(+) site.

This sequence belongs to the peptidase T1B family. HslV subfamily. As to quaternary structure, a double ring-shaped homohexamer of HslV is capped on each side by a ring-shaped HslU homohexamer. The assembly of the HslU/HslV complex is dependent on binding of ATP.

The protein localises to the cytoplasm. The enzyme catalyses ATP-dependent cleavage of peptide bonds with broad specificity.. With respect to regulation, allosterically activated by HslU binding. Its function is as follows. Protease subunit of a proteasome-like degradation complex believed to be a general protein degrading machinery. The sequence is that of ATP-dependent protease subunit HslV from Zymomonas mobilis subsp. mobilis (strain ATCC 31821 / ZM4 / CP4).